Reading from the N-terminus, the 284-residue chain is Bifunctional protein FolD (284 aa).

Residues G166–S168 and I232 contribute to the NADP(+) site.

It belongs to the tetrahydrofolate dehydrogenase/cyclohydrolase family. In terms of assembly, homodimer.

It carries out the reaction (6R)-5,10-methylene-5,6,7,8-tetrahydrofolate + NADP(+) = (6R)-5,10-methenyltetrahydrofolate + NADPH. The catalysed reaction is (6R)-5,10-methenyltetrahydrofolate + H2O = (6R)-10-formyltetrahydrofolate + H(+). The protein operates within one-carbon metabolism; tetrahydrofolate interconversion. Its function is as follows. Catalyzes the oxidation of 5,10-methylenetetrahydrofolate to 5,10-methenyltetrahydrofolate and then the hydrolysis of 5,10-methenyltetrahydrofolate to 10-formyltetrahydrofolate. This Shewanella baltica (strain OS223) protein is Bifunctional protein FolD.